A 232-amino-acid chain; its full sequence is Large ribosomal subunit protein uL1 (232 aa).

The protein belongs to the universal ribosomal protein uL1 family. In terms of assembly, part of the 50S ribosomal subunit.

Its function is as follows. Binds directly to 23S rRNA. The L1 stalk is quite mobile in the ribosome, and is involved in E site tRNA release. In terms of biological role, protein L1 is also a translational repressor protein, it controls the translation of the L11 operon by binding to its mRNA. This is Large ribosomal subunit protein uL1 from Coxiella burnetii (strain RSA 331 / Henzerling II).